Consider the following 269-residue polypeptide: uncharacterized protein (269 aa).

It belongs to the methyltransferase superfamily.

This is an uncharacterized protein from Mycobacterium leprae (strain Br4923).